The sequence spans 742 residues: Polyribonucleotide nucleotidyltransferase (742 aa).

Mg(2+) is bound by residues D515 and D521. Residues 581 to 640 (PRIITITIPVDKIGEVIGPKGKIINQIQDDTGASISIEDDGTIYIGATNGEAAEAAKNAV) enclose the KH domain. The S1 motif domain occupies 652–724 (GERYLGTVVK…DRGKLSLVPV (73 aa)).

This sequence belongs to the polyribonucleotide nucleotidyltransferase family. It depends on Mg(2+) as a cofactor.

The protein localises to the cytoplasm. The catalysed reaction is RNA(n+1) + phosphate = RNA(n) + a ribonucleoside 5'-diphosphate. Its function is as follows. Involved in mRNA degradation. Catalyzes the phosphorolysis of single-stranded polyribonucleotides processively in the 3'- to 5'-direction. The polypeptide is Polyribonucleotide nucleotidyltransferase (Nocardioides sp. (strain ATCC BAA-499 / JS614)).